A 301-amino-acid chain; its full sequence is Alpha-ketoglutarate-dependent sulfate ester dioxygenase (301 aa).

His81 provides a ligand contact to substrate. Residues His108 and Asp110 each contribute to the Fe cation site. Val111 serves as a coordination point for substrate. Thr135 is a binding site for 2-oxoglutarate. His264 serves as a coordination point for Fe cation. 2-oxoglutarate is bound by residues Arg275 and Arg279.

It belongs to the TfdA dioxygenase family. As to quaternary structure, homotetramer. Requires Fe(2+) as cofactor.

The catalysed reaction is a primary linear alkyl sulfate ester + 2-oxoglutarate + O2 = an aldehyde + sulfate + succinate + CO2 + H(+). It catalyses the reaction 2-ethylhexyl sulfate + 2-oxoglutarate + O2 = 2-ethylhexanal + sulfate + succinate + CO2 + H(+). The enzyme catalyses decyl sulfate + 2-oxoglutarate + O2 = decanal + sulfate + succinate + CO2 + H(+). It carries out the reaction hexyl sulfate + 2-oxoglutarate + O2 = hexanal + sulfate + succinate + CO2 + H(+). The catalysed reaction is nonyl sufate + 2-oxoglutarate + O2 = nonanal + sulfate + succinate + CO2 + H(+). With respect to regulation, strongly stimulated by ascorbate. Its function is as follows. Catalyzes the oxygenolytic cleavage of 2-ethylhexyl sulfate (2-EHS) in the presence of alpha-ketoglutarate to yield 2-ethyl-hexanal and succinate, the decarboxylated form of alpha-ketoglutarate. It can accept a wide range of alpha-keto acids including 2-oxo-valerate, 2-oxo-adipate, 2-oxo-octanoate, 3-methyl-2-oxo-butyrate, oxaloacetate-alpha-ketoadipate, and alpha-ketooctanoate. It can catalyze the cleavage of medium-chain alkyl sulfate esters such as butylsulfate, pentylsulfate, hexylsulfate, heptylsulfate, octylsulfate, nonylsulfate, decylsulfate and sodium dodecyl sulfate (SDS). The polypeptide is Alpha-ketoglutarate-dependent sulfate ester dioxygenase (Pseudomonas putida (Arthrobacter siderocapsulatus)).